Here is a 141-residue protein sequence, read N- to C-terminus: Hemoglobin subunit alpha-D (141 aa).

The Globin domain occupies 1-141; it reads MLNHDEKQLI…VSAVLAEKYR (141 aa). Heme b is bound by residues His58 and His87.

It belongs to the globin family. As to quaternary structure, heterotetramer of two alpha-D chains and two beta chains. In terms of tissue distribution, red blood cells.

In terms of biological role, involved in oxygen transport from the lung to the various peripheral tissues. This is Hemoglobin subunit alpha-D (HBAD) from Chrysemys picta bellii (Western painted turtle).